Reading from the N-terminus, the 150-residue chain is Protein NrdI (150 aa).

It belongs to the NrdI family.

Probably involved in ribonucleotide reductase function. The polypeptide is Protein NrdI (Mycobacterium avium (strain 104)).